Reading from the N-terminus, the 170-residue chain is MKFKKTIGAMALTTMFVAVSASAVEKNITVTASVDPAIDLLQADGNALPSAVKLAYSPASKTFESYRVMTQVHTNDATKKVIVKLADTPQLTDVLNSTVQMPISVSWGGQVLSTTAKEFEAAALGYSASGVNGVSSSQELVISAAPKTAGTAPTAGNYSGVVSLVMTLGS.

Positions Met-1–Ala-23 are cleaved as a signal peptide.

It belongs to the fimbrial CS1 protein family. In terms of assembly, CFA/I fimbriae are rather rigid, thread-like filaments of 0.5-1 micrometer, with an apparent axial hole, and a diameter of 7 nanometers. A single CFA/I fimbria consists of about 100 identical protein subunits.

The protein localises to the fimbrium. In terms of biological role, fimbriae (also called pili), polar filaments radiating from the surface of the bacterium to a length of 0.5-1.5 micrometers and numbering 100-300 per cell, enable bacteria to colonize the epithelium of specific host organs. This chain is CFA/I fimbrial subunit B (cfaB), found in Escherichia coli.